A 346-amino-acid polypeptide reads, in one-letter code: Methylthioribose-1-phosphate isomerase (346 aa).

Substrate contacts are provided by residues 47–49, Arg88, and Gln195; that span reads RGA. Asp236 (proton donor) is an active-site residue. 246–247 is a binding site for substrate; the sequence is NK.

It belongs to the eIF-2B alpha/beta/delta subunits family. MtnA subfamily.

The catalysed reaction is 5-(methylsulfanyl)-alpha-D-ribose 1-phosphate = 5-(methylsulfanyl)-D-ribulose 1-phosphate. The protein operates within amino-acid biosynthesis; L-methionine biosynthesis via salvage pathway; L-methionine from S-methyl-5-thio-alpha-D-ribose 1-phosphate: step 1/6. Its function is as follows. Catalyzes the interconversion of methylthioribose-1-phosphate (MTR-1-P) into methylthioribulose-1-phosphate (MTRu-1-P). The polypeptide is Methylthioribose-1-phosphate isomerase (Maridesulfovibrio salexigens (strain ATCC 14822 / DSM 2638 / NCIMB 8403 / VKM B-1763) (Desulfovibrio salexigens)).